We begin with the raw amino-acid sequence, 56 residues long: Small ribosomal subunit protein uS14 (56 aa).

Zn(2+) contacts are provided by cysteine 21, cysteine 24, cysteine 39, and cysteine 42.

It belongs to the universal ribosomal protein uS14 family. Zinc-binding uS14 subfamily. Part of the 30S ribosomal subunit. Zn(2+) serves as cofactor.

Its function is as follows. Binds 16S rRNA, required for the assembly of 30S particles. This is Small ribosomal subunit protein uS14 from Pyrococcus abyssi (strain GE5 / Orsay).